The primary structure comprises 903 residues: HTH-type transcriptional regulator MalT (903 aa).

An ATP-binding site is contributed by 39–46 (CPAGYGKT). One can recognise an HTH luxR-type domain in the interval 832–897 (ELIRTSPLTQ…EAVQQAQRLL (66 aa)). The segment at residues 856–875 (NDQIANELDVAATTIKTHIR) is a DNA-binding region (H-T-H motif).

This sequence belongs to the MalT family. In terms of assembly, monomer in solution. Oligomerizes to an active state in the presence of the positive effectors ATP and maltotriose.

Its activity is regulated as follows. Activated by ATP and maltotriose, which are both required for DNA binding. In terms of biological role, positively regulates the transcription of the maltose regulon whose gene products are responsible for uptake and catabolism of malto-oligosaccharides. Specifically binds to the promoter region of its target genes, recognizing a short DNA motif called the MalT box. This is HTH-type transcriptional regulator MalT from Yersinia pseudotuberculosis serotype O:1b (strain IP 31758).